We begin with the raw amino-acid sequence, 286 residues long: uncharacterized protein (286 aa).

A helical transmembrane segment spans residues P8–A28.

This sequence to M.jannaschii MJ1495.

Its subcellular location is the membrane. This is an uncharacterized protein from Methanocaldococcus jannaschii (strain ATCC 43067 / DSM 2661 / JAL-1 / JCM 10045 / NBRC 100440) (Methanococcus jannaschii).